Here is an 805-residue protein sequence, read N- to C-terminus: MWGRFLAPEASGRDSPGGARSFPAGPDYSSAWLPANESLWQATTVPSNHRNNHIRRHSIASDSGDTGIGTSCSDSVEDHSTSSGTLSFKPSQSLITLPTAHVMPSNSSASISKLRESLTPDGSKWSTSLMQTLGNHSRGEQDSSLDMKDFRPLRKWSSLSKLTAPDNCGQGGTVCREESRNGLEKIGKAKALTSQLRTIGPSCLHDSMEMLRLEDKEINKKRSSTLDCKYKFESCSKEDFRASSSTLRRQPVDMTYSALPESKPIMTSSEAFEPPKYLMLGQQAVGGVPIQPSVRTQMWLTEQLRTNPLEGRNTEDSYSLAPWQQQQIEDFRQGSETPMQVLTGSSRQSYSPGYQDFSKWESMLKIKEGLLRQKEIVIDRQKQQITHLHERIRDNELRAQHAMLGHYVNCEDSYVASLQPQYENTSLQTPFSEESVSHSQQGEFEQKLASTEKEVLQLNEFLKQRLSLFSEEKKKLEEKLKTRDRYISSLKKKCQKESEQNKEKQRRIETLEKYLADLPTLDDVQSQSLQLQILEEKNKNLQEALIDTEKKLEEIKKQCQDKETQLICQKKKEKELVTTVQSLQQKVERCLEDGIRLPMLDAKQLQNENDNLRQQNETASKIIDSQQDEIDRMILEIQSMQGKLSKEKLTTQKMMEELEKKERNVQRLTKALLENQRQTDETCSLLDQGQEPDQSRQQTVLSKRPLFDLTVIDQLFKEMSCCLFDLKALCSILNQRAQGKEPNLSLLLGIRSMNCSAEETENDHSTETLTKKLSDVCQLRRDIDELRTTISDRYAQDMGDNCITQ.

Disordered stretches follow at residues 1–27 and 50–89; these read MWGR…AGPD and RNNH…LSFK. Serine 15 carries the phosphoserine modification. The segment covering 60 to 74 has biased composition (polar residues); that stretch reads ASDSGDTGIGTSCSD. At serine 207 the chain carries Phosphoserine. The stretch at 439–682 forms a coiled coil; it reads SQQGEFEQKL…LENQRQTDET (244 aa).

The protein belongs to the CEP85 family. As to expression, isoform 1 and isoform 4 are expressed in spleen, lymph, thymus, tonsil and peripheral blood leukocytes, with isoform 1 expressed at higher levels. Isoform 4 is detected in K-562 leukemia cells and in the blood of precursor T lymphoblastic lymphoma (T-ALL) patients.

The protein resides in the cytoplasm. The protein localises to the cytoskeleton. It is found in the microtubule organizing center. It localises to the centrosome. Functionally, plays an essential role in neuronal cell migration. The polypeptide is Centrosomal protein of 85 kDa-like (Homo sapiens (Human)).